The sequence spans 262 residues: MTGYQPHPWHLVEPSPWPLVGGSAAFTLTVGLVMWFHYNSISLMILGLVMIVATMIQWWRDVIREATFQGCHTSYVLSGLRRGMVLFIVSEVFFFLAFFWAFFHSSLAPTVELGVTWPPVGVHPLNAFAVPLLNTAVLLSSGVTVTWAHHALMEGKRTEAIQSLAITVMLGLYFTGLQAWEYYEAPFTIADSVYGSTFFVATGFHGLHVIIGSTFLMVCLGRQVFYHYTSSHHFGFEAAAWYWHFVDVVWLFLYVCIYWWGS.

Transmembrane regions (helical) follow at residues 11–31 (LVEPSPWPLVGGSAAFTLTVG), 32–52 (LVMWFHYNSISLMILGLVMIV), 83–103 (GMVLFIVSEVFFFLAFFWAFF), 125–147 (LNAFAVPLLNTAVLLSSGVTVTW), 160–180 (AIQSLAITVMLGLYFTGLQAW), 198–218 (FFVATGFHGLHVIIGSTFLMV), and 240–260 (AWYWHFVDVVWLFLYVCIYWW).

Belongs to the cytochrome c oxidase subunit 3 family. As to quaternary structure, component of the cytochrome c oxidase (complex IV, CIV), a multisubunit enzyme composed of a catalytic core of 3 subunits and several supernumerary subunits. The complex exists as a monomer or a dimer and forms supercomplexes (SCs) in the inner mitochondrial membrane with ubiquinol-cytochrome c oxidoreductase (cytochrome b-c1 complex, complex III, CIII).

Its subcellular location is the mitochondrion inner membrane. It carries out the reaction 4 Fe(II)-[cytochrome c] + O2 + 8 H(+)(in) = 4 Fe(III)-[cytochrome c] + 2 H2O + 4 H(+)(out). In terms of biological role, component of the cytochrome c oxidase, the last enzyme in the mitochondrial electron transport chain which drives oxidative phosphorylation. The respiratory chain contains 3 multisubunit complexes succinate dehydrogenase (complex II, CII), ubiquinol-cytochrome c oxidoreductase (cytochrome b-c1 complex, complex III, CIII) and cytochrome c oxidase (complex IV, CIV), that cooperate to transfer electrons derived from NADH and succinate to molecular oxygen, creating an electrochemical gradient over the inner membrane that drives transmembrane transport and the ATP synthase. Cytochrome c oxidase is the component of the respiratory chain that catalyzes the reduction of oxygen to water. Electrons originating from reduced cytochrome c in the intermembrane space (IMS) are transferred via the dinuclear copper A center (CU(A)) of subunit 2 and heme A of subunit 1 to the active site in subunit 1, a binuclear center (BNC) formed by heme A3 and copper B (CU(B)). The BNC reduces molecular oxygen to 2 water molecules using 4 electrons from cytochrome c in the IMS and 4 protons from the mitochondrial matrix. This is Cytochrome c oxidase subunit 3 (COIII) from Branchiostoma floridae (Florida lancelet).